Here is a 319-residue protein sequence, read N- to C-terminus: Aspartate carbamoyltransferase catalytic subunit (319 aa).

2 residues coordinate carbamoyl phosphate: Arg-65 and Thr-66. Position 93 (Lys-93) interacts with L-aspartate. Carbamoyl phosphate-binding residues include Arg-115, His-143, and Gln-146. Positions 176 and 230 each coordinate L-aspartate. Residues Gly-271 and Pro-272 each coordinate carbamoyl phosphate.

This sequence belongs to the aspartate/ornithine carbamoyltransferase superfamily. ATCase family. In terms of assembly, heterododecamer (2C3:3R2) of six catalytic PyrB chains organized as two trimers (C3), and six regulatory PyrI chains organized as three dimers (R2).

The enzyme catalyses carbamoyl phosphate + L-aspartate = N-carbamoyl-L-aspartate + phosphate + H(+). It participates in pyrimidine metabolism; UMP biosynthesis via de novo pathway; (S)-dihydroorotate from bicarbonate: step 2/3. In terms of biological role, catalyzes the condensation of carbamoyl phosphate and aspartate to form carbamoyl aspartate and inorganic phosphate, the committed step in the de novo pyrimidine nucleotide biosynthesis pathway. The protein is Aspartate carbamoyltransferase catalytic subunit of Chelativorans sp. (strain BNC1).